Consider the following 1798-residue polypeptide: U3 small nucleolar RNA-associated protein 10 (1798 aa).

An HEAT 1 repeat occupies 583-620; the sequence is LDFQALLPFLLVTLTDPSERVRREAAAALAAVGSLYKK. The next 2 membrane-spanning stretches (helical) occupy residues 942-962 and 998-1018; these read IQSG…AIVN and ALLL…HSVM. HEAT repeat units follow at residues 1042-1079, 1249-1286, 1293-1331, and 1754-1791; these read QTID…AFEH, LTLV…QNPE, IRVL…KYGK, and ALLP…VLGE.

This sequence belongs to the HEATR1/UTP10 family. As to quaternary structure, component of the ribosomal small subunit (SSU) processome.

It localises to the nucleus. The protein resides in the nucleolus. The protein localises to the membrane. In terms of biological role, involved in nucleolar processing of pre-18S ribosomal RNA. Involved in ribosome biosynthesis. The sequence is that of U3 small nucleolar RNA-associated protein 10 from Aspergillus fumigatus (strain ATCC MYA-4609 / CBS 101355 / FGSC A1100 / Af293) (Neosartorya fumigata).